We begin with the raw amino-acid sequence, 273 residues long: Shikimate dehydrogenase (NADP(+)) (273 aa).

Shikimate-binding positions include 14-16 (SLS) and Thr59. Lys63 acts as the Proton acceptor in catalysis. Shikimate-binding residues include Asn84 and Asp99. NADP(+) is bound by residues 122–126 (GAGGA) and Met212. Tyr214 serves as a coordination point for shikimate. NADP(+) is bound at residue Gly235.

Belongs to the shikimate dehydrogenase family. Homodimer.

The enzyme catalyses shikimate + NADP(+) = 3-dehydroshikimate + NADPH + H(+). It participates in metabolic intermediate biosynthesis; chorismate biosynthesis; chorismate from D-erythrose 4-phosphate and phosphoenolpyruvate: step 4/7. Functionally, involved in the biosynthesis of the chorismate, which leads to the biosynthesis of aromatic amino acids. Catalyzes the reversible NADPH linked reduction of 3-dehydroshikimate (DHSA) to yield shikimate (SA). This chain is Shikimate dehydrogenase (NADP(+)), found in Aeropyrum pernix (strain ATCC 700893 / DSM 11879 / JCM 9820 / NBRC 100138 / K1).